The chain runs to 293 residues: Succinate--CoA ligase [ADP-forming] subunit alpha (293 aa).

CoA contacts are provided by residues 21–24, K47, and 99–101; these read TGKQ and ITE. Y162 is a substrate binding site. H249 acts as the Tele-phosphohistidine intermediate in catalysis.

Belongs to the succinate/malate CoA ligase alpha subunit family. Heterotetramer of two alpha and two beta subunits.

The enzyme catalyses succinate + ATP + CoA = succinyl-CoA + ADP + phosphate. It carries out the reaction GTP + succinate + CoA = succinyl-CoA + GDP + phosphate. It functions in the pathway carbohydrate metabolism; tricarboxylic acid cycle; succinate from succinyl-CoA (ligase route): step 1/1. In terms of biological role, succinyl-CoA synthetase functions in the citric acid cycle (TCA), coupling the hydrolysis of succinyl-CoA to the synthesis of either ATP or GTP and thus represents the only step of substrate-level phosphorylation in the TCA. The alpha subunit of the enzyme binds the substrates coenzyme A and phosphate, while succinate binding and nucleotide specificity is provided by the beta subunit. This chain is Succinate--CoA ligase [ADP-forming] subunit alpha, found in Methanothermobacter thermautotrophicus (strain ATCC 29096 / DSM 1053 / JCM 10044 / NBRC 100330 / Delta H) (Methanobacterium thermoautotrophicum).